We begin with the raw amino-acid sequence, 125 residues long: Holo-[acyl-carrier-protein] synthase (125 aa).

Positions 8 and 57 each coordinate Mg(2+).

It belongs to the P-Pant transferase superfamily. AcpS family. It depends on Mg(2+) as a cofactor.

The protein localises to the cytoplasm. The catalysed reaction is apo-[ACP] + CoA = holo-[ACP] + adenosine 3',5'-bisphosphate + H(+). Transfers the 4'-phosphopantetheine moiety from coenzyme A to a Ser of acyl-carrier-protein. In Neisseria meningitidis serogroup C (strain 053442), this protein is Holo-[acyl-carrier-protein] synthase.